We begin with the raw amino-acid sequence, 287 residues long: MAAITAALVKELRERTGEGMMDCKKALEKAGGDIEKAIDDMRASGAIKAAKKAGNVAAEGAIAVKTDGTSAVLLEVNSQTDFLALQDDFKNFVAESLEEAFAQKLTDAAPLIASREAAREALVAKCGENVNIRRLVRVEGDVVGAYLHGNKIGAVVVLKGGDVELAKNIAMHVAASNPEFLDSSEISAEAIEREKNVFLQLNADKIAGKPENIVENMINGRITKFKAEASLKEQAFVMNPEIKVGELAKKAGAEIVSFTYFKVGEGIEKPVDDFAAEVAAQVAAAKQ.

The segment at 80–83 is involved in Mg(2+) ion dislocation from EF-Tu; that stretch reads TDFL.

The protein belongs to the EF-Ts family.

It is found in the cytoplasm. In terms of biological role, associates with the EF-Tu.GDP complex and induces the exchange of GDP to GTP. It remains bound to the aminoacyl-tRNA.EF-Tu.GTP complex up to the GTP hydrolysis stage on the ribosome. The polypeptide is Elongation factor Ts (Pseudomonas putida (strain ATCC 47054 / DSM 6125 / CFBP 8728 / NCIMB 11950 / KT2440)).